The sequence spans 498 residues: Cytochrome P450 monooxygenase idtP (498 aa).

Residues 1–20 (MFLLHILAIGACLLWYFVRS) form the signal peptide. Residue Cys439 coordinates heme.

Belongs to the cytochrome P450 family. Heme is required as a cofactor.

The protein operates within secondary metabolite biosynthesis. Its function is as follows. Cytochrome P450 monooxygenase; part of the gene cluster that mediates the biosynthesis of paspalitrems, indole-diterpene (IDT) mycotoxins that are potent tremorgens in mammals. The geranylgeranyl diphosphate (GGPP) synthase idtG is proposed to catalyze the first step in IDT biosynthesis via catalysis of a series of iterative condensations of isopentenyl diphosphate (IPP) with dimethylallyl diphosphate (DMAPP), geranyl diphosphate (GPP), and farnesyl diphosphate (FPP), to form GGPP. Condensation of indole-3-glycerol phosphate with GGPP by the prenyltransferase idtC then forms 3-geranylgeranylindole (3-GGI). Epoxidation of the two terminal alkenes of the geranylgeranyl moiety by the FAD-dependent monooxygenase idtM, and cyclization by the terpene cyclase idtB then leads to the production of paspaline. The cytochrome P450 monooxygenase idtP then catalyzes oxidative elimination of the pendant methyl group at C-12 of paspaline and generates the C-10 ketone to yield 13-desoxypaxilline. The cytochrome P450 monooxygenase idtQ may catalyze the C-13 oxidation of 13-desoxypaxilline to afford paxilline. Considering that both paspalicine and paxilline were detected in C.paspali, idtQ also catalyzes the formation of paspalinine from 13-desoxypaxilline via paspalicine as an intermediate. Finally, the alpha-prenyltransferase idtF prenylates paspalinine at the C-20 or the C-21 positions to yield paspalitrems A and C, respectively. The hydroxylation of paspalitrem A at C-32 by a still unknown oxidase affords paspalitrem B. The protein is Cytochrome P450 monooxygenase idtP of Claviceps paspali (Rye ergot fungus).